The primary structure comprises 657 residues: Threonine--tRNA ligase (657 aa).

One can recognise a TGS domain in the interval 7-70; sequence QQASIAITLP…LCDANIEIVT (64 aa). The segment at 253 to 555 is catalytic; it reads DHRKLGTELE…LIEHTAGNFP (303 aa). Cys-351, His-402, and His-532 together coordinate Zn(2+).

This sequence belongs to the class-II aminoacyl-tRNA synthetase family. Homodimer. Requires Zn(2+) as cofactor.

The protein resides in the cytoplasm. It carries out the reaction tRNA(Thr) + L-threonine + ATP = L-threonyl-tRNA(Thr) + AMP + diphosphate + H(+). Its function is as follows. Catalyzes the attachment of threonine to tRNA(Thr) in a two-step reaction: L-threonine is first activated by ATP to form Thr-AMP and then transferred to the acceptor end of tRNA(Thr). Also edits incorrectly charged L-seryl-tRNA(Thr). The chain is Threonine--tRNA ligase from Chlorobium limicola (strain DSM 245 / NBRC 103803 / 6330).